A 441-amino-acid chain; its full sequence is Chitinase-like protein Idgf3 (441 aa).

The N-terminal stretch at 1–23 (MTGSLWLSLALSLAVLAQFKVSA) is a signal peptide. One can recognise a GH18 domain in the interval 25–441 (PNLVCFYDSQ…MLRAIKYRLL (417 aa)). Cysteine 29 and cysteine 56 form a disulfide bridge. N-linked (GlcNAc...) asparagine glycosylation is present at asparagine 221. Positions 307-331 (KDSGDSGMPVVPSTQGPAPAGPQSK) are disordered. Cysteine 342 and cysteine 425 are joined by a disulfide.

The protein belongs to the glycosyl hydrolase 18 family. IDGF subfamily. In terms of processing, glycosylated. In terms of tissue distribution, primarily expressed in yolk cells and fat body. In larvae, it is expressed in small and large salivary gland cells, and weakly expressed in imaginal disks. Less expressed than Idgf2 and Idgf4.

It localises to the secreted. Cooperates with insulin-like peptides to stimulate the proliferation, polarization and motility of imaginal disk cells. May act by stabilizing the binding of insulin-like peptides to its receptor through a simultaneous interaction with both molecules to form a multiprotein signaling complex. The protein is Chitinase-like protein Idgf3 (Idgf3) of Drosophila melanogaster (Fruit fly).